The chain runs to 664 residues: MPSRKHLANAIRALSMDGVQKANSGHPGAPMGMADIAEVLWRGHLNHNPSNPEWADRDRFVLSNGHGSMLIYSLLHLSGYELSIDDLKNFRQLHSKTPGHPEYGYAPGIETTTGPLGQGITNAVGMAMAEKALAAQFNKPGHDIVDHFTYVFMGDGCLMEGISHEACSLAGTLGLGKLIAFWDDNGISIDGHVEGWFSDDTPKRFEAYGWHVIPAVDGHNAEAINAAIEAAKADPRPTLICTKTIIGFGSPNKSGSHDCHGAPLGAEEIAAAREFLGWEHPAFEIPADVYAEWDAKAAGAEKEAAWNAKFDAYAAAYPTEAAELKRRLNGELPAEWEEKANQIIADLQANPANIASRKASQNALEAFGKMLPEFMGGSADLAPSNLTMWSGSKSLEANDFSGNYIHYGVREFGMTAIMNGIALHGGFVPYGATFLMFMEYARNAMRMAALMKVQNIQVYTHDSIGLGEDGPTHQPVEQIASLRLTPNMSTWRPCDQVESAVAWKLAIERKDGPSALIFSRQNLAQQPRSAEQVADIAKGGYILKDSDGKPELILIATGSEVELAVKAAEQLTAEGKKVRVVSMPATDTFDKQDAAYREAVLPSDVTARIAIEAGIADFWYKYVGFDGRIIGMTTFGESAPADQLFEMFGFTVENVVNTAKELLA.

Residue His26 participates in substrate binding. Residues His66 and 114-116 contribute to the thiamine diphosphate site; that span reads GPL. Asp155 contacts Mg(2+). Residues Gly156 and Asn185 each coordinate thiamine diphosphate. Residues Asn185 and Ile187 each coordinate Mg(2+). 3 residues coordinate substrate: His260, Arg357, and Ser384. His260 serves as a coordination point for thiamine diphosphate. The Proton donor role is filled by Glu411. Phe437 contributes to the thiamine diphosphate binding site. Substrate is bound by residues His461, Asp469, and Arg520.

The protein belongs to the transketolase family. Homodimer. Mg(2+) is required as a cofactor. The cofactor is Ca(2+). Requires Mn(2+) as cofactor. Co(2+) serves as cofactor. It depends on thiamine diphosphate as a cofactor.

It carries out the reaction D-sedoheptulose 7-phosphate + D-glyceraldehyde 3-phosphate = aldehydo-D-ribose 5-phosphate + D-xylulose 5-phosphate. Functionally, catalyzes the transfer of a two-carbon ketol group from a ketose donor to an aldose acceptor, via a covalent intermediate with the cofactor thiamine pyrophosphate. This is Transketolase 1 (tkt1) from Vibrio vulnificus (strain CMCP6).